Here is a 349-residue protein sequence, read N- to C-terminus: Green-sensitive opsin-3 (349 aa).

Over 1 to 36 the chain is Extracellular; sequence MNGTEGNNFYIPMSNRTGLVRSPYEYPQYYLAEPWQ. Residues N2 and N15 are each glycosylated (N-linked (GlcNAc...) asparagine). A helical transmembrane segment spans residues 37 to 61; the sequence is FKLLAVYMFFLMCFGFPINGLTLVV. At 62 to 73 the chain is on the cytoplasmic side; that stretch reads TAQHKKLRQPLN. A helical membrane pass occupies residues 74–99; sequence FILVNLAVAGTIMVCFGFTVTFYTAI. Over 100–113 the chain is Extracellular; it reads NGYFVLGPTGCAIE. Residues C110 and C187 are joined by a disulfide bond. Residues 114–133 traverse the membrane as a helical segment; sequence GFMATLGGQISLWSLVVLAI. Over 134 to 152 the chain is Cytoplasmic; the sequence is ERYIVVCKPMGSFKFSSNH. A helical transmembrane segment spans residues 153 to 176; that stretch reads AFAGIGFTWIMALSCAAPPLVGWS. Topologically, residues 177-202 are extracellular; sequence RYIPEGMQCSCGPDYYTLNPDYNNES. The N-linked (GlcNAc...) asparagine glycan is linked to N200. Residues 203–230 form a helical membrane-spanning segment; it reads YVLYMFCCHFIFPVTTIFFTYGRLVCTV. The Cytoplasmic portion of the chain corresponds to 231–252; that stretch reads KAAAAQQQESESTQKAEREVTR. Residues 253 to 276 traverse the membrane as a helical segment; that stretch reads MVILMVLGFLVAWTPYASVAAWIF. Topologically, residues 277–284 are extracellular; the sequence is FNRGAAFS. The helical transmembrane segment at 285–309 threads the bilayer; sequence AQFMAVPAFFSKSSSIFNPIIYVLL. N6-(retinylidene)lysine is present on K296. Residues 310-349 are Cytoplasmic-facing; that stretch reads NKQFRNCMLTTLFCGKNPLGDDESSTVSTSKTEVSSVSPA. Residues 329-349 form a disordered region; it reads GDDESSTVSTSKTEVSSVSPA. Positions 334-349 are enriched in low complexity; it reads STVSTSKTEVSSVSPA.

Belongs to the G-protein coupled receptor 1 family. Opsin subfamily. In terms of processing, phosphorylated on some or all of the serine and threonine residues present in the C-terminal region.

Its subcellular location is the membrane. In terms of biological role, visual pigments are the light-absorbing molecules that mediate vision. They consist of an apoprotein, opsin, covalently linked to cis-retinal. In Danio rerio (Zebrafish), this protein is Green-sensitive opsin-3 (opn1mw3).